The following is a 303-amino-acid chain: MSRLNINFLGKELKNNVITSSGCFGFGEEYSNYFDVNELGAVNLKGITLNKKDGNKGTRIAETPSGMINCIGLENPGIEYFKDNIIKNIKYSTPIILNINGATIDEYVKVAEIANEIERVDFVELNISCPNVKNGGMAFGASCESAESTTKAVKKVLSKKPLIVKLSPNVTDIASIAKAVEDAGADSVSLVNTFLSMKIDTKTRKPLLGNIFGGLSGACIRPIAVRMVYQVYKAVKIPIVGMGGITNYNDALEFILAGASLVSIGAGIFSNPILPIEVINGIDNYLKENNISNIKDIIGAAHL.

Residues S21 and K45–G46 each bind FMN. Substrate-binding positions include K45 and N69–L73. The FMN site is built by N98 and N126. N126 contacts substrate. The Nucleophile role is filled by C129. FMN-binding residues include K165 and V191. N192 to T193 is a binding site for substrate. Residues G217 and G243–G244 each bind FMN.

It belongs to the dihydroorotate dehydrogenase family. Type 1 subfamily. Heterotetramer of 2 PyrK and 2 PyrD type B subunits. Requires FMN as cofactor.

It is found in the cytoplasm. The enzyme catalyses (S)-dihydroorotate + NAD(+) = orotate + NADH + H(+). It functions in the pathway pyrimidine metabolism; UMP biosynthesis via de novo pathway; orotate from (S)-dihydroorotate (NAD(+) route): step 1/1. In terms of biological role, catalyzes the conversion of dihydroorotate to orotate with NAD(+) as electron acceptor. This Brachyspira hyodysenteriae (strain ATCC 49526 / WA1) protein is Dihydroorotate dehydrogenase B (NAD(+)), catalytic subunit (pyrD).